The chain runs to 546 residues: Light-independent protochlorophyllide reductase subunit B (546 aa).

D36 is a [4Fe-4S] cluster binding site. D287 (proton donor) is an active-site residue. 422-423 provides a ligand contact to substrate; the sequence is GL. The tract at residues 443–501 is disordered; sequence PSHLSAHRPTGEAVGDAVGEPPAAPRDQAAPAATLDGSAAQSDPARTTPPGAPSWEDSA.

It belongs to the ChlB/BchB/BchZ family. Protochlorophyllide reductase is composed of three subunits; BchL, BchN and BchB. Forms a heterotetramer of two BchB and two BchN subunits. The cofactor is [4Fe-4S] cluster.

The enzyme catalyses chlorophyllide a + oxidized 2[4Fe-4S]-[ferredoxin] + 2 ADP + 2 phosphate = protochlorophyllide a + reduced 2[4Fe-4S]-[ferredoxin] + 2 ATP + 2 H2O. It functions in the pathway porphyrin-containing compound metabolism; bacteriochlorophyll biosynthesis (light-independent). In terms of biological role, component of the dark-operative protochlorophyllide reductase (DPOR) that uses Mg-ATP and reduced ferredoxin to reduce ring D of protochlorophyllide (Pchlide) to form chlorophyllide a (Chlide). This reaction is light-independent. The NB-protein (BchN-BchB) is the catalytic component of the complex. The protein is Light-independent protochlorophyllide reductase subunit B of Rhodospirillum rubrum (strain ATCC 11170 / ATH 1.1.1 / DSM 467 / LMG 4362 / NCIMB 8255 / S1).